The chain runs to 175 residues: Ribosome maturation factor RimM (175 aa).

The PRC barrel domain occupies 96 to 175 (EEDYYWHDLI…TITVDWDAGF (80 aa)).

The protein belongs to the RimM family. As to quaternary structure, binds ribosomal protein uS19.

The protein resides in the cytoplasm. Its function is as follows. An accessory protein needed during the final step in the assembly of 30S ribosomal subunit, possibly for assembly of the head region. Essential for efficient processing of 16S rRNA. May be needed both before and after RbfA during the maturation of 16S rRNA. It has affinity for free ribosomal 30S subunits but not for 70S ribosomes. This chain is Ribosome maturation factor RimM, found in Haemophilus ducreyi (strain 35000HP / ATCC 700724).